Reading from the N-terminus, the 313-residue chain is Porphobilinogen deaminase (313 aa).

The residue at position 241 (Cys-241) is an S-(dipyrrolylmethanemethyl)cysteine.

It belongs to the HMBS family. Monomer. It depends on dipyrromethane as a cofactor.

It carries out the reaction 4 porphobilinogen + H2O = hydroxymethylbilane + 4 NH4(+). The protein operates within porphyrin-containing compound metabolism; protoporphyrin-IX biosynthesis; coproporphyrinogen-III from 5-aminolevulinate: step 2/4. Its pathway is porphyrin-containing compound metabolism; chlorophyll biosynthesis. Its function is as follows. Tetrapolymerization of the monopyrrole PBG into the hydroxymethylbilane pre-uroporphyrinogen in several discrete steps. This is Porphobilinogen deaminase from Chlorobium luteolum (strain DSM 273 / BCRC 81028 / 2530) (Pelodictyon luteolum).